The following is a 155-amino-acid chain: Interleukin-2 (155 aa).

A signal peptide spans 1-20 (MYKMQLLSCIALMLVLVANS). O-linked (GalNAc...) threonine glycosylation is present at threonine 24. Cysteine 79 and cysteine 127 form a disulfide bridge. Asparagine 112 carries an N-linked (GlcNAc...) asparagine glycan.

Belongs to the IL-2 family.

It is found in the secreted. Cytokine produced by activated CD4-positive helper T-cells and to a lesser extend activated CD8-positive T-cells and natural killer (NK) cells that plays pivotal roles in the immune response and tolerance. Binds to a receptor complex composed of either the high-affinity trimeric IL-2R (IL2RA/CD25, IL2RB/CD122 and IL2RG/CD132) or the low-affinity dimeric IL-2R (IL2RB and IL2RG). Interaction with the receptor leads to oligomerization and conformation changes in the IL-2R subunits resulting in downstream signaling starting with phosphorylation of JAK1 and JAK3. In turn, JAK1 and JAK3 phosphorylate the receptor to form a docking site leading to the phosphorylation of several substrates including STAT5. This process leads to activation of several pathways including STAT, phosphoinositide-3-kinase/PI3K and mitogen-activated protein kinase/MAPK pathways. Functions as a T-cell growth factor and can increase NK-cell cytolytic activity as well. Promotes strong proliferation of activated B-cells and subsequently immunoglobulin production. Plays a pivotal role in regulating the adaptive immune system by controlling the survival and proliferation of regulatory T-cells, which are required for the maintenance of immune tolerance. Moreover, participates in the differentiation and homeostasis of effector T-cell subsets, including Th1, Th2, Th17 as well as memory CD8-positive T-cells. In Vulpes vulpes (Red fox), this protein is Interleukin-2 (IL2).